The sequence spans 43 residues: Peroxidase (43 aa).

It belongs to the peroxidase family. Classical plant (class III) peroxidase subfamily. The cofactor is Ca(2+). It depends on heme b as a cofactor.

It carries out the reaction 2 a phenolic donor + H2O2 = 2 a phenolic radical donor + 2 H2O. Functionally, removal of H(2)O(2), oxidation of toxic reductants, biosynthesis and degradation of lignin, suberization, auxin catabolism, response to environmental stresses such as wounding, pathogen attack and oxidative stress. These functions might be dependent on each isozyme/isoform in each plant tissue. In Cynara cardunculus var. scolymus (Globe artichoke), this protein is Peroxidase.